The primary structure comprises 100 residues: MEEASEGGGNDRVRNLQSEVEGVKNIMTQNVERILARGENLEHLRNKTEDLEATSEHFKTTSQKVARKFWWKNVKMIVLICVIVFIIILFIVLFATGAFS.

N-acetylmethionine is present on Met1. Residues 1-75 are Cytoplasmic-facing; it reads MEEASEGGGN…ARKFWWKNVK (75 aa). A phosphoserine mark is found at Ser5 and Ser18. In terms of domain architecture, v-SNARE coiled-coil homology spans 12-72; sequence RVRNLQSEVE…QKVARKFWWK (61 aa). Residues Thr28, Thr48, and Thr54 each carry the phosphothreonine modification. Ser55 bears the Phosphoserine mark. 2 (Microbial infection) N6-stearoyl lysine lipidation sites follow: Lys64 and Lys68. The helical; Anchor for type IV membrane protein transmembrane segment at 76-96 threads the bilayer; the sequence is MIVLICVIVFIIILFIVLFAT. The Vesicular segment spans residues 97 to 100; the sequence is GAFS.

The protein belongs to the synaptobrevin family. Forms a SNARE complex composed of VAMP8, SNAP29 and STX17 involved in fusion of autophagosome with lysosome. Found in a number of SNARE complexes with NAPA, SNAP23, SNAP25, STX1A, STX4, STX7, STX8 and VTI1B. Interacts with PICALM. SNARE complex formation and binding by PICALM are mutually exclusive processes for VAMP8. Interacts with SBF2/MTMR13. Interacts with RAB21 (in GTP-bound form) in response to starvation; the interaction probably regulates VAMP8 endolysosomal trafficking. Interacts with STX17; this interaction is increased in the absence of TMEM39A. Interacts with TRIM6. In terms of assembly, (Microbial infection) The interaction with STX17 is decreased in presence of SARS coronavirus-2/SARS-CoV-2 ORF3A protein. In terms of processing, (Microbial infection) Stearoylated By S.flexneri N-epsilon-fatty acyltransferase IcsB, thereby disrupting the host actin cytoskeleton. Platelets.

The protein resides in the lysosome membrane. Its subcellular location is the early endosome membrane. It is found in the late endosome membrane. It localises to the cell membrane. The protein localises to the zymogen granule membrane. SNAREs, soluble N-ethylmaleimide-sensitive factor-attachment protein receptors, are essential proteins for fusion of cellular membranes. SNAREs localized on opposing membranes assemble to form a trans-SNARE complex, an extended, parallel four alpha-helical bundle that drives membrane fusion. VAMP8 is a SNARE involved in autophagy through the direct control of autophagosome membrane fusion with the lysososome membrane via its interaction with the STX17-SNAP29 binary t-SNARE complex. Also required for dense-granule secretion in platelets. Also plays a role in regulated enzyme secretion in pancreatic acinar cells. Involved in the abscission of the midbody during cell division, which leads to completely separate daughter cells. Involved in the homotypic fusion of early and late endosomes. Also participates in the activation of type I interferon antiviral response through a TRIM6-dependent mechanism. The protein is Vesicle-associated membrane protein 8 of Homo sapiens (Human).